Consider the following 508-residue polypeptide: Photosystem II CP47 reaction center protein (508 aa).

A run of 6 helical transmembrane segments spans residues 21–36 (SVHI…WAGS), 101–115 (IMFS…IWHW), 140–156 (GIHL…FGAF), 203–218 (IAAG…FHLS), 237–252 (VLSS…AFVV), and 457–472 (SFAL…HGAR).

Belongs to the PsbB/PsbC family. PsbB subfamily. PSII is composed of 1 copy each of membrane proteins PsbA, PsbB, PsbC, PsbD, PsbE, PsbF, PsbH, PsbI, PsbJ, PsbK, PsbL, PsbM, PsbT, PsbX, PsbY, PsbZ, Psb30/Ycf12, at least 3 peripheral proteins of the oxygen-evolving complex and a large number of cofactors. It forms dimeric complexes. Binds multiple chlorophylls. PSII binds additional chlorophylls, carotenoids and specific lipids. is required as a cofactor.

It localises to the plastid. The protein localises to the chloroplast thylakoid membrane. One of the components of the core complex of photosystem II (PSII). It binds chlorophyll and helps catalyze the primary light-induced photochemical processes of PSII. PSII is a light-driven water:plastoquinone oxidoreductase, using light energy to abstract electrons from H(2)O, generating O(2) and a proton gradient subsequently used for ATP formation. In Ceratophyllum demersum (Rigid hornwort), this protein is Photosystem II CP47 reaction center protein.